Consider the following 254-residue polypeptide: Alcohol dehydrogenase 1 (254 aa).

Residue 10-33 (FVAGLGGIGFDTSREIVKKGPKNL) participates in NAD(+) binding. Ser-138 serves as a coordination point for substrate. Tyr-151 functions as the Proton acceptor in the catalytic mechanism.

The protein belongs to the short-chain dehydrogenases/reductases (SDR) family. As to quaternary structure, homodimer.

The enzyme catalyses a primary alcohol + NAD(+) = an aldehyde + NADH + H(+). It carries out the reaction a secondary alcohol + NAD(+) = a ketone + NADH + H(+). The polypeptide is Alcohol dehydrogenase 1 (Adh1) (Drosophila mojavensis (Fruit fly)).